We begin with the raw amino-acid sequence, 1857 residues long: Ankyrin repeat domain-containing protein 31 (1857 aa).

Disordered stretches follow at residues 1 to 30 (MENG…EDEE) and 195 to 215 (SEPG…DEES). Residues 195–207 (SEPGEEVTQTMTS) are compositionally biased toward polar residues. 3 ANK repeats span residues 475 to 504 (FGEN…NVNQ), 508 to 537 (DGWT…DVNV), and 541 to 570 (YQIT…DPLF). Residues 676–691 (KFGKSNLNSVKNSRTN) are compositionally biased toward polar residues. Disordered regions lie at residues 676 to 711 (KFGK…VDDR), 813 to 844 (VTTH…KGKA), 995 to 1038 (RDSS…TVVH), 1046 to 1065 (KAEK…NTDF), and 1075 to 1137 (ANSS…QNFR). Positions 692–704 (VSKRKGQKNRQQK) are enriched in basic residues. A compositionally biased stretch (polar residues) spans 814 to 839 (TTHQQPHTNQEQYSSPYKSLGNNSSN). Over residues 1008–1019 (SLERKQDTDKNY) the composition is skewed to basic and acidic residues. Over residues 1023–1032 (GPNTSSSSRP) the composition is skewed to polar residues. The span at 1082-1136 (QRKEKENVRKSDAELTHNDSEAERTLKSCEEKKKNMDSETHSPCDIQEHRKDQNF) shows a compositional bias: basic and acidic residues. 3 ANK repeats span residues 1162–1191 (KGES…DVNL), 1195–1224 (AGWT…NVNC), and 1228–1257 (DGIV…NPNQ). 4 disordered regions span residues 1457-1479 (NSDI…AHAQ), 1540-1570 (GGLL…AENS), 1609-1640 (DPHS…AEPL), and 1663-1697 (AAAA…TTPR). Residues 1555–1570 (ASSSQPAALTPHAENS) show a composition bias toward polar residues. A compositionally biased stretch (low complexity) spans 1663-1683 (AAAASHTDSTQSSLSSASAHQ). The 96-residue stretch at 1687-1782 (KTVPHRNTTP…TYLGRELVKC (96 aa)) folds into the RAMA domain.

As to quaternary structure, interacts with REC114; the interaction is direct. Interacts with IHO1. As to expression, present in meiotic cells (at protein level).

The protein localises to the nucleus. Its subcellular location is the chromosome. Required for DNA double-strand breaks (DSBs) formation during meiotic recombination. Regulates the spatial and temporal patterns of pre-DSB recombinosome assembly and recombination activity by acting as a scaffold that anchors REC114 and other factors to specific genomic locations, thereby regulating DSB formation. Plays a key role in recombination in the pseudoautosomal regions of sex chromosomes. This chain is Ankyrin repeat domain-containing protein 31, found in Mus musculus (Mouse).